The sequence spans 153 residues: Aspartate carbamoyltransferase regulatory chain (153 aa).

Zn(2+) is bound by residues cysteine 109, cysteine 114, cysteine 138, and cysteine 141.

The protein belongs to the PyrI family. In terms of assembly, contains catalytic and regulatory chains. The cofactor is Zn(2+).

Functionally, involved in allosteric regulation of aspartate carbamoyltransferase. In Vibrio vulnificus (strain YJ016), this protein is Aspartate carbamoyltransferase regulatory chain.